Here is a 227-residue protein sequence, read N- to C-terminus: Probable septum site-determining protein MinC (227 aa).

Belongs to the MinC family. Interacts with MinD and FtsZ.

Its function is as follows. Cell division inhibitor that blocks the formation of polar Z ring septums. Rapidly oscillates between the poles of the cell to destabilize FtsZ filaments that have formed before they mature into polar Z rings. Prevents FtsZ polymerization. The chain is Probable septum site-determining protein MinC from Bacillus pumilus (strain SAFR-032).